The chain runs to 345 residues: Anthranilate phosphoribosyltransferase (345 aa).

Residues Gly84, 87-88, Thr92, 94-97, 112-120, and Ser124 contribute to the 5-phospho-alpha-D-ribose 1-diphosphate site; these read GD, NIST, and KHGNRSVSS. An anthranilate-binding site is contributed by Gly84. Mg(2+) is bound at residue Ser96. Residue Asn115 coordinates anthranilate. Arg170 contacts anthranilate. Mg(2+) contacts are provided by Asp229 and Glu230.

Belongs to the anthranilate phosphoribosyltransferase family. Homodimer. The cofactor is Mg(2+).

The enzyme catalyses N-(5-phospho-beta-D-ribosyl)anthranilate + diphosphate = 5-phospho-alpha-D-ribose 1-diphosphate + anthranilate. The protein operates within amino-acid biosynthesis; L-tryptophan biosynthesis; L-tryptophan from chorismate: step 2/5. In terms of biological role, catalyzes the transfer of the phosphoribosyl group of 5-phosphorylribose-1-pyrophosphate (PRPP) to anthranilate to yield N-(5'-phosphoribosyl)-anthranilate (PRA). The polypeptide is Anthranilate phosphoribosyltransferase (Xanthomonas oryzae pv. oryzae (strain MAFF 311018)).